The primary structure comprises 210 residues: ATP-dependent Clp protease proteolytic subunit (210 aa).

Ser114 serves as the catalytic Nucleophile. His139 is a catalytic residue.

Belongs to the peptidase S14 family. As to quaternary structure, fourteen ClpP subunits assemble into 2 heptameric rings which stack back to back to give a disk-like structure with a central cavity, resembling the structure of eukaryotic proteasomes.

It localises to the cytoplasm. It carries out the reaction Hydrolysis of proteins to small peptides in the presence of ATP and magnesium. alpha-casein is the usual test substrate. In the absence of ATP, only oligopeptides shorter than five residues are hydrolyzed (such as succinyl-Leu-Tyr-|-NHMec, and Leu-Tyr-Leu-|-Tyr-Trp, in which cleavage of the -Tyr-|-Leu- and -Tyr-|-Trp bonds also occurs).. In terms of biological role, cleaves peptides in various proteins in a process that requires ATP hydrolysis. Has a chymotrypsin-like activity. Plays a major role in the degradation of misfolded proteins. In Janthinobacterium sp. (strain Marseille) (Minibacterium massiliensis), this protein is ATP-dependent Clp protease proteolytic subunit.